A 476-amino-acid polypeptide reads, in one-letter code: Cytochrome P450 6B5 (476 aa).

Cys443 is a binding site for heme.

It belongs to the cytochrome P450 family. Heme serves as cofactor.

The protein localises to the endoplasmic reticulum membrane. Its subcellular location is the microsome membrane. It catalyses the reaction an organic molecule + reduced [NADPH--hemoprotein reductase] + O2 = an alcohol + oxidized [NADPH--hemoprotein reductase] + H2O + H(+). Enables the insect to feed on furanocoumarin-producing plants and evolved as an adaptation for detoxification of xanthotoxin and other furanocoumarins. This is Cytochrome P450 6B5 (CYP6B5) from Papilio glaucus (Eastern tiger swallowtail butterfly).